Reading from the N-terminus, the 264-residue chain is tRNA (guanine-N(1)-)-methyltransferase (264 aa).

Residues Gly133 and Leu152–Met157 each bind S-adenosyl-L-methionine. A compositionally biased stretch (basic and acidic residues) spans Gln240 to Gly251. Residues Gln240–Arg264 are disordered. The span at Pro255 to Arg264 shows a compositional bias: acidic residues.

Belongs to the RNA methyltransferase TrmD family. In terms of assembly, homodimer.

The protein resides in the cytoplasm. The enzyme catalyses guanosine(37) in tRNA + S-adenosyl-L-methionine = N(1)-methylguanosine(37) in tRNA + S-adenosyl-L-homocysteine + H(+). Its function is as follows. Specifically methylates guanosine-37 in various tRNAs. The polypeptide is tRNA (guanine-N(1)-)-methyltransferase (Sorangium cellulosum (strain So ce56) (Polyangium cellulosum (strain So ce56))).